A 416-amino-acid polypeptide reads, in one-letter code: PTS system N-acetylglucosamine-specific EIIC component (416 aa).

The region spanning 16 to 406 (SGLFQGLQKV…FNLKTPGREP (391 aa)) is the PTS EIIC type-1 domain. 10 consecutive transmembrane segments (helical) span residues 68 to 88 (AGGA…AIGF), 96 to 116 (TALA…AFPV), 130 to 150 (TYND…AVLW), 170 to 190 (LVPI…GLVW), 196 to 216 (GISN…ALFG), 266 to 286 (IFQA…ALAM), 298 to 318 (VLGM…TEPI), 323 to 343 (MFIA…SMAI), 344 to 364 (TWGL…DYAL), and 375 to 395 (IIPI…FAIV).

It is found in the cell membrane. Its function is as follows. The phosphoenolpyruvate-dependent sugar phosphotransferase system (sugar PTS), a major carbohydrate active transport system, catalyzes the phosphorylation of incoming sugar substrates concomitantly with their translocation across the cell membrane. This system is involved in N-acetylglucosamine (GlcNAc) transport. High-affinity permease, which exhibits a narrow specificity for GlcNAc. Essential for C-signaling between vegetative growth and development. This chain is PTS system N-acetylglucosamine-specific EIIC component, found in Streptomyces coelicolor (strain ATCC BAA-471 / A3(2) / M145).